Consider the following 675-residue polypeptide: DNA gyrase subunit B (675 aa).

Residues 453-567 (SELYVVEGDS…NGHIFLAQPP (115 aa)) form the Toprim domain. The Mg(2+) site is built by E459, D532, and D534.

Belongs to the type II topoisomerase GyrB family. Heterotetramer, composed of two GyrA and two GyrB chains. In the heterotetramer, GyrA contains the active site tyrosine that forms a transient covalent intermediate with DNA, while GyrB binds cofactors and catalyzes ATP hydrolysis. The cofactor is Mg(2+). Requires Mn(2+) as cofactor. Ca(2+) serves as cofactor.

It is found in the cytoplasm. The catalysed reaction is ATP-dependent breakage, passage and rejoining of double-stranded DNA.. Inhibited by 4-quinoline drugs (nalidixic acid, ciprofloxacin, ofloxacin), although it is much less sensitive than the corresponding enzyme from E.coli. GyrB intrinsic ATPase activity inhibited by aminopyrazinamide and pyrrolamide derivatives. In terms of biological role, a type II topoisomerase that negatively supercoils closed circular double-stranded (ds) DNA in an ATP-dependent manner to modulate DNA topology and maintain chromosomes in an underwound state. Negative supercoiling favors strand separation, and DNA replication, transcription, recombination and repair, all of which involve strand separation. Also able to catalyze the interconversion of other topological isomers of dsDNA rings, including catenanes and knotted rings. Type II topoisomerases break and join 2 DNA strands simultaneously in an ATP-dependent manner. The chain is DNA gyrase subunit B from Mycolicibacterium smegmatis (strain ATCC 700084 / mc(2)155) (Mycobacterium smegmatis).